The following is a 360-amino-acid chain: Heme A synthase (360 aa).

The next 5 helical transmembrane spans lie at 13-33 (AVRWWLISVAALIALMVLVGG), 99-119 (LLGRFIGVAYLLPFLFFLWRG), 129-149 (LWLLFALGGLQGAVGWWMVAS), 160-180 (YRLATHLVLALLIFAGIVWTV), and 199-219 (SALLLVVTFVQIYLGALVAGL). A heme-binding site is contributed by H263. Transmembrane regions (helical) follow at residues 265 to 282 (MTAYALFVLAALHAFDAV), 292 to 312 (GALWLFAAVSLQAVLGILTLL), and 315 to 335 (VPIGLALAHQAVAIAVLTLAV). H323 serves as a coordination point for heme.

Belongs to the COX15/CtaA family. Type 2 subfamily. As to quaternary structure, interacts with CtaB. Heme b is required as a cofactor.

It localises to the cell membrane. It catalyses the reaction Fe(II)-heme o + 2 A + H2O = Fe(II)-heme a + 2 AH2. Its pathway is porphyrin-containing compound metabolism; heme A biosynthesis; heme A from heme O: step 1/1. Catalyzes the conversion of heme O to heme A by two successive hydroxylations of the methyl group at C8. The first hydroxylation forms heme I, the second hydroxylation results in an unstable dihydroxymethyl group, which spontaneously dehydrates, resulting in the formyl group of heme A. This is Heme A synthase from Bradyrhizobium diazoefficiens (strain JCM 10833 / BCRC 13528 / IAM 13628 / NBRC 14792 / USDA 110).